Consider the following 125-residue polypeptide: uncharacterized protein (125 aa).

This is an uncharacterized protein from Methanocaldococcus jannaschii (strain ATCC 43067 / DSM 2661 / JAL-1 / JCM 10045 / NBRC 100440) (Methanococcus jannaschii).